The sequence spans 298 residues: Oxygen-dependent coproporphyrinogen-III oxidase (298 aa).

Ser-92 is a substrate binding site. The a divalent metal cation site is built by His-96 and His-106. Catalysis depends on His-106, which acts as the Proton donor. Asn-108–Arg-110 serves as a coordination point for substrate. Residues His-145 and His-175 each coordinate a divalent metal cation. Residues Tyr-239–Glu-274 are important for dimerization. Gly-257–Arg-259 is a substrate binding site.

It belongs to the aerobic coproporphyrinogen-III oxidase family. Homodimer. It depends on a divalent metal cation as a cofactor.

The protein localises to the cytoplasm. The enzyme catalyses coproporphyrinogen III + O2 + 2 H(+) = protoporphyrinogen IX + 2 CO2 + 2 H2O. Its pathway is porphyrin-containing compound metabolism; protoporphyrin-IX biosynthesis; protoporphyrinogen-IX from coproporphyrinogen-III (O2 route): step 1/1. In terms of biological role, involved in the heme biosynthesis. Catalyzes the aerobic oxidative decarboxylation of propionate groups of rings A and B of coproporphyrinogen-III to yield the vinyl groups in protoporphyrinogen-IX. This chain is Oxygen-dependent coproporphyrinogen-III oxidase, found in Stenotrophomonas maltophilia (strain K279a).